We begin with the raw amino-acid sequence, 556 residues long: Endoplasmic reticulum membrane protein 65 (556 aa).

Residues 1 to 87 (MQHKDTAVAK…IRIPMFLEKF (87 aa)) are Cytoplasmic-facing. A Phosphoserine modification is found at S22. The helical transmembrane segment at 88–108 (MLFALLTSLDCFLYYFTVLPI) threads the bilayer. The Lumenal portion of the chain corresponds to 109–151 (RLIKGYVKQFKSYRQHYRLQQRSGHKNKIPFRYRITSREYKER). Residues 152 to 172 (CMIFIIVISSILLSKLDTSKL) form a helical membrane-spanning segment. Over 173–224 (YHRIKRQSTMKLYMLFSVLEMADKMLASLGQSLLTVMLSRKNSERILLHKCL) the chain is Cytoplasmic. A helical transmembrane segment spans residues 225 to 245 (LVSMSLTYVTIHGYVLVYQAI). Residues 246–330 (SLNIAVNSYS…INFWSPRSTL (85 aa)) lie on the Lumenal side of the membrane. An N-linked (GlcNAc...) asparagine glycan is attached at N318. The chain crosses the membrane as a helical span at residues 331 to 351 (SIVINILCGPMVSVVGSEVLV). The Cytoplasmic portion of the chain corresponds to 352–391 (DWAKHAYITKFNRIRPQIYDKFYYIIYKDYSTRTHKLEDR). The helical transmembrane segment at 392-412 (LGLPLPAFVVLFIVMVRPTLF) threads the bilayer. At 413-428 (KSSEPSYLPSLFRILF) the chain is on the lumenal side. The helical transmembrane segment at 429-449 (MGASVFLLALLAKFTLDLILI) threads the bilayer. Residues 450-556 (KWSKRIEQRF…RYKMVSKRIW (107 aa)) are Cytoplasmic-facing.

It belongs to the TAPT1 family. In terms of assembly, interacts with SLP1.

It localises to the endoplasmic reticulum membrane. The protein localises to the mitochondrion. Its function is as follows. May be involved in membrane protein folding. The chain is Endoplasmic reticulum membrane protein 65 from Saccharomyces cerevisiae (strain ATCC 204508 / S288c) (Baker's yeast).